A 308-amino-acid chain; its full sequence is Coenzyme PQQ synthesis protein B (308 aa).

Belongs to the PqqB family.

It functions in the pathway cofactor biosynthesis; pyrroloquinoline quinone biosynthesis. Functionally, may be involved in the transport of PQQ or its precursor to the periplasm. This Klebsiella pneumoniae subsp. pneumoniae (strain ATCC 700721 / MGH 78578) protein is Coenzyme PQQ synthesis protein B.